The sequence spans 112 residues: Cryptic phage CTXphi transcriptional repressor RstR (112 aa).

The HTH cro/C1-type domain occupies 7-61 (LANQRKAINKTQAQMADEIGISLTSYKKYESGEGLPTMENLVKIADALEISIDEL). Residues 18-37 (QAQMADEIGISLTSYKKYES) constitute a DNA-binding region (H-T-H motif).

Its function is as follows. Transcriptional repressor of the integrated CTXPhi phage gene rstA2. In Vibrio cholerae serotype O1 (strain ATCC 39315 / El Tor Inaba N16961), this protein is Cryptic phage CTXphi transcriptional repressor RstR (rstR1).